Here is a 90-residue protein sequence, read N- to C-terminus: Photosystem I reaction center subunit PsaK 2 (90 aa).

Transmembrane regions (helical) follow at residues 20-42 (LSVG…FAIQ) and 67-89 (LATM…SSGI).

This sequence belongs to the PsaG/PsaK family.

It is found in the cellular thylakoid membrane. In Synechocystis sp. (strain ATCC 27184 / PCC 6803 / Kazusa), this protein is Photosystem I reaction center subunit PsaK 2 (psaK2).